Here is a 336-residue protein sequence, read N- to C-terminus: Dihydroorotate dehydrogenase (quinone) (336 aa).

FMN is bound by residues Ala62–Lys66 and Thr86. Lys66 is a binding site for substrate. Asn111–Phe115 contacts substrate. FMN contacts are provided by Asn139 and Asn172. Residue Asn172 coordinates substrate. Ser175 serves as the catalytic Nucleophile. Asn177 contributes to the substrate binding site. 2 residues coordinate FMN: Lys217 and Thr245. Asn246–Thr247 contributes to the substrate binding site. FMN-binding positions include Gly268, Gly297, and Tyr318–Ser319.

The protein belongs to the dihydroorotate dehydrogenase family. Type 2 subfamily. In terms of assembly, monomer. FMN serves as cofactor.

Its subcellular location is the cell membrane. The catalysed reaction is (S)-dihydroorotate + a quinone = orotate + a quinol. It functions in the pathway pyrimidine metabolism; UMP biosynthesis via de novo pathway; orotate from (S)-dihydroorotate (quinone route): step 1/1. Functionally, catalyzes the conversion of dihydroorotate to orotate with quinone as electron acceptor. This Hamiltonella defensa subsp. Acyrthosiphon pisum (strain 5AT) protein is Dihydroorotate dehydrogenase (quinone).